Consider the following 320-residue polypeptide: Beta-ketoacyl-[acyl-carrier-protein] synthase III (320 aa).

Catalysis depends on residues Cys112 and His245. Positions 246–250 (QANIR) are ACP-binding. Residue Asn275 is part of the active site.

It belongs to the thiolase-like superfamily. FabH family. As to quaternary structure, homodimer.

The protein resides in the cytoplasm. It carries out the reaction malonyl-[ACP] + acetyl-CoA + H(+) = 3-oxobutanoyl-[ACP] + CO2 + CoA. Its pathway is lipid metabolism; fatty acid biosynthesis. Functionally, catalyzes the condensation reaction of fatty acid synthesis by the addition to an acyl acceptor of two carbons from malonyl-ACP. Catalyzes the first condensation reaction which initiates fatty acid synthesis and may therefore play a role in governing the total rate of fatty acid production. Possesses both acetoacetyl-ACP synthase and acetyl transacylase activities. Its substrate specificity determines the biosynthesis of branched-chain and/or straight-chain of fatty acids. The polypeptide is Beta-ketoacyl-[acyl-carrier-protein] synthase III (Streptococcus thermophilus (strain CNRZ 1066)).